The primary structure comprises 249 residues: MNVLSCSINTLIKEGLYEISGVEVGQHFYWQIGGFQVHAQVLITSWVVIAILLGSAVLAIRNPQTIPTDGQNFFEFVLEFIRDVSKTQIGEEYGPWVPFIGTLFLFIFVSNWSGALLPWKIIQLPQGELAAPTNDINTTVALALLTSVAYFYAGLSKKGLGYFSKYIQPTPILLPINILEDFTKPLSLSFRLFGNILADELVVVVLVSLVPLVVPIPVMFLGLFTSGIQALIFATLAAAYIGESMEGHH.

A run of 5 helical transmembrane segments spans residues 40–60 (QVLITSWVVIAILLGSAVLAI), 97–117 (VPFIGTLFLFIFVSNWSGALL), 136–156 (INTTVALALLTSVAYFYAGLS), 201–221 (LVVVVLVSLVPLVVPIPVMFL), and 222–242 (GLFTSGIQALIFATLAAAYIG).

Belongs to the ATPase A chain family. F-type ATPases have 2 components, CF(1) - the catalytic core - and CF(0) - the membrane proton channel. CF(1) has five subunits: alpha(3), beta(3), gamma(1), delta(1), epsilon(1). CF(0) has four main subunits: a, b, b' and c.

It localises to the plastid. It is found in the chloroplast thylakoid membrane. Functionally, key component of the proton channel; it plays a direct role in the translocation of protons across the membrane. The sequence is that of ATP synthase subunit a, chloroplastic from Nasturtium officinale (Watercress).